A 602-amino-acid chain; its full sequence is Probable translation initiation factor IF-2 (602 aa).

The 216-residue stretch at 18–233 folds into the tr-type G domain; it reads LRTPIVCVMG…LVGLAQRFLK (216 aa). Positions 27 to 34 are G1; sequence GHVDHGKT. Position 27–34 (27–34) interacts with GTP; the sequence is GHVDHGKT. The segment at 52-56 is G2; the sequence is AITQH. The interval 88–91 is G3; that stretch reads DTPG. GTP is bound by residues 88–92 and 142–145; these read DTPGH and NKID. The tract at residues 142–145 is G4; that stretch reads NKID. Positions 210–212 are G5; sequence SAI.

Belongs to the TRAFAC class translation factor GTPase superfamily. Classic translation factor GTPase family. IF-2 subfamily.

Functionally, function in general translation initiation by promoting the binding of the formylmethionine-tRNA to ribosomes. Seems to function along with eIF-2. This is Probable translation initiation factor IF-2 from Methanothrix thermoacetophila (strain DSM 6194 / JCM 14653 / NBRC 101360 / PT) (Methanosaeta thermophila).